A 141-amino-acid polypeptide reads, in one-letter code: ATP synthase epsilon chain (141 aa).

It belongs to the ATPase epsilon chain family. In terms of assembly, F-type ATPases have 2 components, CF(1) - the catalytic core - and CF(0) - the membrane proton channel. CF(1) has five subunits: alpha(3), beta(3), gamma(1), delta(1), epsilon(1). CF(0) has three main subunits: a, b and c.

The protein resides in the cell inner membrane. Functionally, produces ATP from ADP in the presence of a proton gradient across the membrane. The sequence is that of ATP synthase epsilon chain from Pseudomonas aeruginosa (strain LESB58).